Here is a 754-residue protein sequence, read N- to C-terminus: Lysophospholipase 3 (754 aa).

Residues 1–19 form the signal peptide; the sequence is MKVNLKLIIGSILISQAQA. Composition is skewed to low complexity over residues 25 to 40 and 50 to 88; these read SSGS…SETG and LFGS…SSNS. The tract at residues 25–88 is disordered; it reads SSGSSSSSDS…DSSLFSSSNS (64 aa). N-linked (GlcNAc...) asparagine glycans are attached at residues N112, N156, N174, N317, N325, N354, N391, N423, N470, N510, N515, N560, N577, N597, N625, and N631. The 557-residue stretch at 114–670 folds into the PLA2c domain; sequence TCPSKKTFIR…QEYCWTGGFK (557 aa). The segment covering 687-721 has biased composition (low complexity); that stretch reads KTHTSGGTSSTTQQTSTTTGSSANGGSSSTGSSSS. The disordered stretch occupies residues 687 to 727; sequence KTHTSGGTSSTTQQTSTTTGSSANGGSSSTGSSSSSKKKNG.

Belongs to the lysophospholipase family.

It localises to the secreted. The enzyme catalyses a 1-acyl-sn-glycero-3-phosphocholine + H2O = sn-glycerol 3-phosphocholine + a fatty acid + H(+). Functionally, catalyzes the release of fatty acids from lysophospholipids. Phospholipase B may well contribute to pathogenicity by abetting the fungus in damaging and traversing host cell membranes, processes which likely increase the rapidity of disseminated infection. This Candida albicans (Yeast) protein is Lysophospholipase 3 (PLB3).